We begin with the raw amino-acid sequence, 233 residues long: Ribosome maturation factor RimM (233 aa).

The segment at methionine 1–glutamate 51 is disordered. The span at glycine 11 to glycine 28 shows a compositional bias: gly residues. The region spanning glycine 145–leucine 226 is the PRC barrel domain.

This sequence belongs to the RimM family. In terms of assembly, binds ribosomal protein uS19.

It localises to the cytoplasm. Its function is as follows. An accessory protein needed during the final step in the assembly of 30S ribosomal subunit, possibly for assembly of the head region. Essential for efficient processing of 16S rRNA. May be needed both before and after RbfA during the maturation of 16S rRNA. It has affinity for free ribosomal 30S subunits but not for 70S ribosomes. The sequence is that of Ribosome maturation factor RimM from Trichormus variabilis (strain ATCC 29413 / PCC 7937) (Anabaena variabilis).